The primary structure comprises 95 residues: Large ribosomal subunit protein bL27 (95 aa).

Residues 1 to 21 are disordered; sequence MAHKKGASSSRNGRDSNAQRL. Residues 7–19 show a composition bias toward polar residues; sequence ASSSRNGRDSNAQ.

This sequence belongs to the bacterial ribosomal protein bL27 family.

In Parafrankia sp. (strain EAN1pec), this protein is Large ribosomal subunit protein bL27.